Here is a 430-residue protein sequence, read N- to C-terminus: Asparagine--tRNA ligase (430 aa).

It belongs to the class-II aminoacyl-tRNA synthetase family.

The protein resides in the cytoplasm. It carries out the reaction tRNA(Asn) + L-asparagine + ATP = L-asparaginyl-tRNA(Asn) + AMP + diphosphate + H(+). The sequence is that of Asparagine--tRNA ligase from Thermococcus gammatolerans (strain DSM 15229 / JCM 11827 / EJ3).